The chain runs to 592 residues: Peroxisomal targeting signal receptor (592 aa).

Cys10 participates in a covalent cross-link: Glycyl cysteine thioester (Cys-Gly) (interchain with G-Cter in ubiquitin). Positions 11–33 (SVNGNAVAQFNKHTQQDRSLQQQ) are amphipathic helix 1 (AH1). Lys22 is covalently cross-linked (Glycyl lysine isopeptide (Lys-Gly) (interchain with G-Cter in ubiquitin)). Residues 22 to 46 (KHTQQDRSLQQQVANQHGNVAQNQG) show a composition bias toward polar residues. A disordered region spans residues 22–49 (KHTQQDRSLQQQVANQHGNVAQNQGFKK). The tract at residues 58 to 76 (RANLDQFMNNGAPQNSFQF) is amphipathic helix 2 (AH2). Short sequence motifs (wxxxF/Y motif) lie at residues 100 to 104 (WSQDF), 128 to 132 (WASEF), and 185 to 189 (WENQF). An amphipathic helix 4 (AH4) region spans residues 223 to 239 (FQEVWDSLNSESFENDF). Positions 262-266 (WEKDF) match the WxxxF/Y motif 4 motif. 5 TPR repeats span residues 295-329 (DQDP…DENH), 330-363 (VDAW…HPEN), 440-473 (ADVQ…RPDD), 475-507 (ILWN…KPTF), and 509-541 (RARY…HQVE).

It belongs to the peroxisomal targeting signal receptor family. As to quaternary structure, interacts (via WxxxF/Y and LVxEF motifs) with PEX14; promoting translocation through the PEX13-PEX14 docking complex. Post-translationally, monoubiquitinated at Cys-10 by PEX2 during PEX5 passage through the retrotranslocation channel: monoubiquitination acts as a signal for PEX5 extraction and is required for proper export from peroxisomes and recycling. When PEX5 recycling is compromised, polyubiquitinated at Lys-22 by PEX10 during its passage through the retrotranslocation channel, leading to its degradation.

The protein resides in the cytoplasm. The protein localises to the cytosol. Its subcellular location is the peroxisome matrix. Receptor that mediates peroxisomal import of proteins containing a C-terminal PTS1-type tripeptide peroxisomal targeting signal (SKL-type). Binds to cargo proteins containing a PTS1 peroxisomal targeting signal in the cytosol, and translocates them into the peroxisome matrix by passing through the PEX13-PEX14 docking complex along with cargo proteins. PEX5 receptor is then retrotranslocated into the cytosol, leading to release of bound cargo in the peroxisome matrix, and reset for a subsequent peroxisome import cycle. The protein is Peroxisomal targeting signal receptor (PEX5) of Candida albicans (strain SC5314 / ATCC MYA-2876) (Yeast).